An 801-amino-acid chain; its full sequence is Glycerol-3-phosphate acyltransferase 2, mitochondrial (801 aa).

The disordered stretch occupies residues 1–24; sequence METMLKSNPQMQQRNNHSGQETSL. Residues 1–305 are Cytoplasmic-facing; it reads METMLKSNPQ…PGPRLSALGQ (305 aa). An acyltransferase region spans residues 180–290; the sequence is QLHKGQMKMV…SGQPLLIFLE (111 aa). Positions 205-210 match the HXXXXD motif motif; the sequence is HKSLLD. Residues 306-332 traverse the membrane as a helical segment; the sequence is AWLGLVVQAVQAGIVPDATLVPVATAY. Over 333 to 449 the chain is Mitochondrial intermembrane; it reads DLVPDAPCNM…QLLVRRLSRH (117 aa). A helical transmembrane segment spans residues 450-472; the sequence is VLSASVASSAVMSTAIMATLLLL. At 473–795 the chain is on the cytoplasmic side; that stretch reads KHQKGVVLSQ…DNQDKLEQFI (323 aa).

Belongs to the GPAT/DAPAT family. As to quaternary structure, interacts with PIWIL2. As to expression, expressed in spermatocytes and spermatides.

Its subcellular location is the mitochondrion outer membrane. The enzyme catalyses sn-glycerol 3-phosphate + an acyl-CoA = a 1-acyl-sn-glycero-3-phosphate + CoA. It catalyses the reaction a 1-acyl-sn-glycero-3-phosphate + an acyl-CoA = a 1,2-diacyl-sn-glycero-3-phosphate + CoA. It carries out the reaction 1-(9Z-octadecenoyl)-sn-glycero-3-phosphate + (9Z)-octadecenoyl-CoA = 1,2-di-(9Z-octadecenoyl)-sn-glycero-3-phosphate + CoA. The catalysed reaction is 1-(9Z-octadecenoyl)-sn-glycero-3-phosphate + (5Z,8Z,11Z,14Z)-eicosatetraenoyl-CoA = 1-(9Z)-octadecenoyl-2-(5Z,8Z,11Z,14Z)-eicosatetraenoyl-sn-glycero-3-phosphate + CoA. The enzyme catalyses (5Z,8Z,11Z,14Z)-eicosatetraenoyl-CoA + sn-glycerol 3-phosphate = 1-(5Z,8Z,11Z,14Z-eicosatetraenoyl)-sn-glycero-3-phosphate + CoA. Its pathway is phospholipid metabolism; CDP-diacylglycerol biosynthesis; CDP-diacylglycerol from sn-glycerol 3-phosphate: step 1/3. Inhibited by N-ethylmaleimide (NEM). Functionally, transfers an acyl-group from acyl-ACP to the sn-1 position of glycerol-3-phosphate producing a lysophosphatidic acid (LPA), an essential step for the triacylglycerol (TAG) and glycerophospholipids. In vitro also transfers an acyl-group from acyl-ACP to the LPA producing a phosphatidic acid (PA). Prefers arachidonoyl-CoA as the acyl donor. Required for primary processing step during piRNA biosynthesis. Molecular mechanisms by which it promotes piRNA biosynthesis are unclear and do not involve its acyltransferase activity. In Rattus norvegicus (Rat), this protein is Glycerol-3-phosphate acyltransferase 2, mitochondrial.